Consider the following 378-residue polypeptide: MATVIHNPLKALGDQFYKEAIEHCRSYNSRLCAERSVRLPFLDSQTGVAQNNCYIWMEKRHRGPGLAPGQLYTYPARCWRKKRRLHPPEDPKLRLLEIKPEVELPLKKDGFTSESTTLEALLRGEGVEKKVDAREEESIQEIQRVLENDENVEEGNEEEDLEEDVPKRKNRTRGRARGSAGGRRRHDAASQEDHDKPYVCDICGKRYKNRPGLSYHYAHTHLASEEGDEAQDQETRSPPNHRNENHRPQKGPDGTVIPNNYCDFCLGGSNMNKKSGRPEELVSCADCGRSGHPTCLQFTLNMTEAVKTYKWQCIECKSCILCGTSENDDQLLFCDDCDRGYHMYCLNPPVAEPPEGSWSCHLCWELLKEKASAFGCQA.

K99 is covalently cross-linked (Glycyl lysine isopeptide (Lys-Gly) (interchain with G-Cter in SUMO2)). A disordered region spans residues 146–193; that stretch reads LENDENVEEGNEEEDLEEDVPKRKNRTRGRARGSAGGRRRHDAASQED. Acidic residues predominate over residues 148–163; that stretch reads NDENVEEGNEEEDLEE. Positions 168 to 186 are enriched in basic residues; that stretch reads RKNRTRGRARGSAGGRRRH. The segment at 198 to 221 adopts a C2H2-type zinc-finger fold; it reads YVCDICGKRYKNRPGLSYHYAHTH. A disordered region spans residues 225–254; it reads EEGDEAQDQETRSPPNHRNENHRPQKGPDG. PHD-type zinc fingers lie at residues 259 to 319 and 316 to 366; these read NNYC…CKSC and CKSC…CWEL. The interval 317-332 is interaction with HDGFL2; the sequence is KSCILCGTSENDDQLL. G323 is subject to Phosphoserine.

It belongs to the requiem/DPF family. Component of the BAF complex, which includes at least actin (ACTB), ARID1A, ARID1B/BAF250, SMARCA2, SMARCA4/BRG1/BAF190A, ACTL6A/BAF53, ACTL6B/BAF53B, SMARCE1/BAF57, SMARCC1/BAF155, SMARCC2/BAF170, SMARCB1/SNF5/INI1, and one or more of SMARCD1/BAF60A, SMARCD2/BAF60B, or SMARCD3/BAF60C. In muscle cells, the BAF complex also contains DPF3. Interacts with acetylated histones H3 and H4. Component of neuron-specific chromatin remodeling complex (nBAF complex) composed of at least, ARID1A/BAF250A or ARID1B/BAF250B, SMARCD1/BAF60A, SMARCD3/BAF60C, SMARCA2/BRM/BAF190B, SMARCA4/BRG1/BAF190A, SMARCB1/BAF47, SMARCC1/BAF155, SMARCE1/BAF57, SMARCC2/BAF170, DPF1/BAF45B, DPF3/BAF45C, ACTL6B/BAF53B and actin. As to quaternary structure, interacts with HDGFL2. Interacts with SMARCA4/BRG1/BAF190A, SMARCC1/BAF155 and SMARCD1/BAF60A. As to expression, expressed in the heart and somites. Expressed in cerebellum and spinal cord, but not in cerebral cortex. Expressed specifically in post-mitotic neurons (at protein level).

It is found in the nucleus. Its function is as follows. Muscle-specific component of the BAF complex, a multiprotein complex involved in transcriptional activation and repression of select genes by chromatin remodeling (alteration of DNA-nucleosome topology). Specifically binds acetylated lysines on histone 3 and 4 (H3K14ac, H3K9ac, H4K5ac, H4K8ac, H4K12ac, H4K16ac). In the complex, it acts as a tissue-specific anchor between histone acetylations and methylations and chromatin remodeling. It thereby probably plays an essential role in heart and skeletal muscle development. Belongs to the neuron-specific chromatin remodeling complex (nBAF complex). During neural development a switch from a stem/progenitor to a post-mitotic chromatin remodeling mechanism occurs as neurons exit the cell cycle and become committed to their adult state. The transition from proliferating neural stem/progenitor cells to post-mitotic neurons requires a switch in subunit composition of the npBAF and nBAF complexes. As neural progenitors exit mitosis and differentiate into neurons, npBAF complexes which contain ACTL6A/BAF53A and PHF10/BAF45A, are exchanged for homologous alternative ACTL6B/BAF53B and DPF1/BAF45B or DPF3/BAF45C subunits in neuron-specific complexes (nBAF). The npBAF complex is essential for the self-renewal/proliferative capacity of the multipotent neural stem cells. The nBAF complex along with CREST plays a role regulating the activity of genes essential for dendrite growth. In terms of biological role, acts as a regulator of myogenesis in cooperation with HDGFL2. Mediates the interaction of HDGFL2 with the BAF complex. HDGFL2-DPF3a activate myogenic genes by increasing chromatin accessibility through recruitment of SMARCA4/BRG1/BAF190A (ATPase subunit of the BAF complex) to myogenic gene promoters. In Mus musculus (Mouse), this protein is Zinc finger protein DPF3 (Dpf3).